The sequence spans 284 residues: 2,3,4,5-tetrahydropyridine-2,6-dicarboxylate N-succinyltransferase (284 aa).

Substrate contacts are provided by Arg111 and Asp148.

It belongs to the transferase hexapeptide repeat family. Homotrimer.

Its subcellular location is the cytoplasm. The enzyme catalyses (S)-2,3,4,5-tetrahydrodipicolinate + succinyl-CoA + H2O = (S)-2-succinylamino-6-oxoheptanedioate + CoA. It functions in the pathway amino-acid biosynthesis; L-lysine biosynthesis via DAP pathway; LL-2,6-diaminopimelate from (S)-tetrahydrodipicolinate (succinylase route): step 1/3. This is 2,3,4,5-tetrahydropyridine-2,6-dicarboxylate N-succinyltransferase from Brucella melitensis biotype 2 (strain ATCC 23457).